A 91-amino-acid chain; its full sequence is Non-specific lipid-transfer protein 1 (91 aa).

4 cysteine pairs are disulfide-bonded: cysteine 3-cysteine 50, cysteine 13-cysteine 27, cysteine 28-cysteine 73, and cysteine 48-cysteine 87.

It belongs to the plant LTP family.

Functionally, plant non-specific lipid-transfer proteins transfer phospholipids as well as galactolipids across membranes. May play a role in wax or cutin deposition in the cell walls of expanding epidermal cells and certain secretory tissues. The sequence is that of Non-specific lipid-transfer protein 1 from Prunus armeniaca (Apricot).